The following is a 334-amino-acid chain: Ficolin-1 (334 aa).

A signal peptide spans 1 to 17 (MQWPTLWAFSGLLCLCP). Residues 47–117 (SCPGFPGPPG…SLGEKELGDT (71 aa)) form a disordered region. The region spanning 50 to 88 (GFPGPPGPKGEPGSPAGRGERGFQGSPGKMGPAGSKGEP) is the Collagen-like domain. In terms of domain architecture, Fibrinogen C-terminal spans 117–334 (TLCQRGPRSC…KVAEMKIRAS (218 aa)). 2 cysteine pairs are disulfide-bonded: Cys119–Cys147 and Cys126–Cys154. Residues 123 to 162 (PRSCKDLLTRGIFLTGWYTIHLPDCRPLTVLCDMDVDGGG) are a domain; contributes to trimerization. Residues 163 to 251 (WTVFQRRVDG…LTLGQFLEGT (89 aa)) form a b domain; contributes to trimerization region. A glycan (N-linked (GlcNAc...) asparagine) is linked at Asn261. The Ca(2+) site is built by Asp270 and Asp272. Cysteines 278 and 291 form a disulfide. 290–292 (NCH) lines the a carbohydrate pocket. The tract at residues 325-334 (KVAEMKIRAS) is p domain.

This sequence belongs to the ficolin lectin family. In terms of assembly, homotrimer. Interacts with elastin/ELN. Interacts (via Fibrinogen C-terminal domain) with FFAR2. Interacts with CRP; may regulate monocyte activation by FCN1. As to expression, highly expressed in liver and spleen.

It localises to the secreted. It is found in the cell membrane. Functionally, extracellular lectin functioning as a pattern-recognition receptor in innate immunity. Binds the sugar moieties of pathogen-associated molecular patterns (PAMPs) displayed on microbes and activates the lectin pathway of the complement system. May also activate monocytes through a G protein-coupled receptor, FFAR2, inducing the secretion of interleukin-8/IL-8. Binds preferentially to 9-O-acetylated 2-6-linked sialic acid derivatives and to various glycans containing sialic acid engaged in a 2-3 linkage. The polypeptide is Ficolin-1 (Fcn1) (Mus musculus (Mouse)).